The chain runs to 914 residues: High affinity cAMP-specific and IBMX-insensitive 3',5'-cyclic phosphodiesterase 8 (914 aa).

Disordered stretches follow at residues 1–27 (MGCSPSTLPPAPSAGQTGERGSLPLDA) and 113–138 (RRATGSTGTSGTSSSGGNSRPGHRKS). Low complexity predominate over residues 116–129 (TGSTGTSGTSSSGG). Positions 312-359 (TQQALYTALHRLKEVVLITDDLLRIQYANRATERLLNMRLDEIISKQL) constitute a PAS domain. Residues 558-893 (TAAIVPAKMK…SQWKKYDEQG (336 aa)) enclose the PDEase domain. The Proton donor role is filled by His-640. A divalent metal cation contacts are provided by His-644, His-682, Asp-683, and Asp-799.

Belongs to the cyclic nucleotide phosphodiesterase family. PDE8 subfamily. A divalent metal cation serves as cofactor. As to expression, expressed in Malpighian tubules and head.

The catalysed reaction is 3',5'-cyclic AMP + H2O = AMP + H(+). The protein operates within purine metabolism; 3',5'-cyclic AMP degradation; AMP from 3',5'-cyclic AMP: step 1/1. In terms of biological role, hydrolyzes the second messenger cAMP, which is a key regulator of many important physiological processes. Involved in the positive regulation of MAP kinase signaling and in inhibiting oxidative stress-induced cell death. This Drosophila melanogaster (Fruit fly) protein is High affinity cAMP-specific and IBMX-insensitive 3',5'-cyclic phosphodiesterase 8.